The following is a 655-amino-acid chain: Integrin beta-5 (655 aa).

The region spanning 1–234 (DLSLSMKDDL…QLIINAYNSI (234 aa)) is the VWFA domain. At 1 to 575 (DLSLSMKDDL…REPECGNTPN (575 aa)) the chain is on the extracellular side. Mg(2+) contacts are provided by Ser3 and Ser5. Positions 5, 8, 9, and 40 each coordinate Ca(2+). Cys58 and Cys67 are joined by a disulfide. Ca(2+) is bound by residues Asn98, Asp100, Pro102, and Glu103. Mg(2+) is bound at residue Glu103. An intrachain disulfide couples Cys115 to Cys156. Asn203 carries an N-linked (GlcNAc...) asparagine glycan. Gly218 lines the Ca(2+) pocket. Cystine bridges form between Cys257–Cys269, Cys289–Cys317, Cys321–Cys340, Cys332–Cys343, Cys345–Cys354, Cys356–Cys386, Cys369–Cys384, Cys378–Cys389, Cys391–Cys404, Cys406–Cys427, Cys411–Cys425, Cys419–Cys430, and Cys432–Cys441. The N-linked (GlcNAc...) asparagine glycan is linked to Asn316. I-EGF domains lie at 321–355 (CSVG…TRCE), 356–405 (CQDG…PFCE), 406–442 (CDNF…DNCN), and 443–482 (CSTD…EMCE). N-linked (GlcNAc...) asparagine glycosylation occurs at Asn408. An N-linked (GlcNAc...) asparagine glycan is attached at Asn442. 9 cysteine pairs are disulfide-bonded: Cys443–Cys466, Cys450–Cys464, Cys458–Cys469, Cys471–Cys481, Cys484–Cys487, Cys491–Cys538, Cys497–Cys517, Cys500–Cys513, and Cys546–Cys570. N-linked (GlcNAc...) asparagine glycosylation is found at Asn510 and Asn561. The helical transmembrane segment at 576–598 (AMTILLAVVGSILLVGLALLAIW) threads the bilayer. Over 599-655 (KLLVTIHDRREFAKFQSERSRARYEMASNPLYRKPISTHTVDFTFNKFNKSYNGTVD) the chain is Cytoplasmic. The residue at position 626 (Ser626) is a Phosphoserine.

Belongs to the integrin beta chain family. Heterodimer of an alpha and a beta subunit. Beta-5 (ITGB5) associates with alpha-V (ITGAV). Interacts with MYO10. Interacts with DAB2. Integrin ITGAV:ITGB5 interacts with FBLN5 (via N-terminus). ITGAV:ITGB5 interacts with CCN3. Interacts with tensin TNS3; TNS3 also interacts with PEAK1, thus acting as an adapter molecule to bridge the association of PEAK1 with ITGB5.

The protein resides in the cell membrane. Integrin alpha-V/beta-5 (ITGAV:ITGB5) is a receptor for fibronectin. It recognizes the sequence R-G-D in its ligand. This Papio cynocephalus (Yellow baboon) protein is Integrin beta-5 (ITGB5).